The following is a 153-amino-acid chain: Peptide methionine sulfoxide reductase B6 (153 aa).

One can recognise a MsrB domain in the interval 28–149; it reads NEEWRTVLSP…NSVALKFSSA (122 aa). Residues cysteine 67, cysteine 70, cysteine 113, and cysteine 116 each contribute to the Zn(2+) site. The cysteines at positions 85 and 138 are disulfide-linked. Cysteine 138 serves as the catalytic Nucleophile.

It belongs to the MsrB Met sulfoxide reductase family. Zn(2+) is required as a cofactor.

Its subcellular location is the cytoplasm. The protein localises to the cytosol. The enzyme catalyses L-methionyl-[protein] + [thioredoxin]-disulfide + H2O = L-methionyl-(R)-S-oxide-[protein] + [thioredoxin]-dithiol. Functionally, catalyzes the reduction of methionine sulfoxide (MetSO) to methionine in proteins. Plays a protective role against oxidative stress by restoring activity to proteins that have been inactivated by methionine oxidation. MSRB family specifically reduces the MetSO R-enantiomer. In Arabidopsis thaliana (Mouse-ear cress), this protein is Peptide methionine sulfoxide reductase B6 (MSRB6).